We begin with the raw amino-acid sequence, 362 residues long: Probable protein phosphatase 2C 24 (362 aa).

The PPM-type phosphatase domain occupies R77–L360. Mn(2+) contacts are provided by D117, G118, D295, and D351.

The protein belongs to the PP2C family. Mg(2+) serves as cofactor. It depends on Mn(2+) as a cofactor.

The enzyme catalyses O-phospho-L-seryl-[protein] + H2O = L-seryl-[protein] + phosphate. It catalyses the reaction O-phospho-L-threonyl-[protein] + H2O = L-threonyl-[protein] + phosphate. The sequence is that of Probable protein phosphatase 2C 24 from Arabidopsis thaliana (Mouse-ear cress).